Consider the following 104-residue polypeptide: Large ribosomal subunit protein uL24 (104 aa).

The protein belongs to the universal ribosomal protein uL24 family. As to quaternary structure, part of the 50S ribosomal subunit.

Functionally, one of two assembly initiator proteins, it binds directly to the 5'-end of the 23S rRNA, where it nucleates assembly of the 50S subunit. In terms of biological role, one of the proteins that surrounds the polypeptide exit tunnel on the outside of the subunit. This is Large ribosomal subunit protein uL24 from Maricaulis maris (strain MCS10) (Caulobacter maris).